We begin with the raw amino-acid sequence, 409 residues long: Tryptophan synthase beta chain (409 aa).

An N6-(pyridoxal phosphate)lysine modification is found at K95.

It belongs to the TrpB family. In terms of assembly, tetramer of two alpha and two beta chains. It depends on pyridoxal 5'-phosphate as a cofactor.

It catalyses the reaction (1S,2R)-1-C-(indol-3-yl)glycerol 3-phosphate + L-serine = D-glyceraldehyde 3-phosphate + L-tryptophan + H2O. It participates in amino-acid biosynthesis; L-tryptophan biosynthesis; L-tryptophan from chorismate: step 5/5. In terms of biological role, the beta subunit is responsible for the synthesis of L-tryptophan from indole and L-serine. This chain is Tryptophan synthase beta chain, found in Pseudomonas savastanoi pv. phaseolicola (Pseudomonas syringae pv. phaseolicola).